The chain runs to 53 residues: Rubredoxin-1 (53 aa).

The region spanning 1-53 is the Rubredoxin-like domain; the sequence is MEKFVCDVCGYIYDPVVGDPDNGVAPGTKFKDIPDTWVCPLCKLDKTHFSKVE. Residues Cys6, Cys9, Cys39, and Cys42 each contribute to the Fe cation site.

This sequence belongs to the rubredoxin family. Fe(3+) serves as cofactor.

Rubredoxin is a small nonheme, iron protein lacking acid-labile sulfide. Its single Fe, chelated to 4 Cys, functions as an electron acceptor and may also stabilize the conformation of the molecule. The sequence is that of Rubredoxin-1 (rubR1) from Clostridium perfringens (strain 13 / Type A).